The sequence spans 2116 residues: Myosin-2 heavy chain (2116 aa).

Residues 30–82 (SDKRYIWYNPDPKERDSYECGEIVSETSDSFTFKTVDGQDRQVKKDDANQRNP) enclose the Myosin N-terminal SH3-like domain. Residues 86–759 (DGVEDMSELS…QLARIEEARE (674 aa)) enclose the Myosin motor domain. N6,N6-dimethyllysine is present on Lys130. 179 to 186 (GESGAGKT) contributes to the ATP binding site. Actin-binding regions lie at residues 638–660 (LASLMATLETTNPHFVRCIIPNN) and 738–752 (RFGITKIFFRAGQLA). The 30-residue stretch at 762-791 (ISEIIKAIQAATRGWIARKVYKQAREHTVA) folds into the IQ domain. Positions 817–2116 (ARPLLKRRNF…MADFFGGFKA (1300 aa)) form a coiled coil. Disordered regions lie at residues 1295–1314 (VNEQLEEEKKQKESNEKRKV), 1363–1399 (DKSVEQLKTLQAKNEELRNTAEEAEGQLDRAERSKKK), 1415–1444 (TAKKVKAEKAMKKAETDYRSTKSELDDAKN), 1711–1731 (VRDQLEEEEDSRSELEDSKRR), 1771–1791 (LEDEKKKLNESERAKKRLESE), and 1805–1844 (NRSRAEKDRKKYEKDLKDTKYKLNDEAATKTQTEIGAAKL). Basic and acidic residues-rich tracts occupy residues 1375 to 1399 (KNEELRNTAEEAEGQLDRAERSKKK), 1415 to 1443 (TAKKVKAEKAMKKAETDYRSTKSELDDAK), and 1722 to 1731 (RSELEDSKRR). Residues 1805–1832 (NRSRAEKDRKKYEKDLKDTKYKLNDEAA) show a composition bias toward basic and acidic residues. Thr1823, Thr1833, and Thr2029 each carry phosphothreonine; by MHCK.

The protein belongs to the TRAFAC class myosin-kinesin ATPase superfamily. Myosin family. Myosin-2 heavy chain is two-headed. It self-assembles into filaments. Hexamer of 2 heavy chain subunits (MHC), 2 alkali light chain subunits (MLC) and 2 regulatory light chain subunits (MLC-2). Associates with elmoA. Phosphorylation inhibits thick filament formation and reduces the actin-activated ATPase activity.

The protein resides in the cytoplasm. It is found in the cell cortex. Myosin is a protein that binds to actin and has ATPase activity that is activated by actin. The protein is Myosin-2 heavy chain (mhcA) of Dictyostelium discoideum (Social amoeba).